The chain runs to 1435 residues: RNA-directed RNA polymerase VP1 (1435 aa).

One can recognise a RdRp catalytic domain in the interval 604 to 880; that stretch reads VLHNVLRPAY…KGVLGAPELF (277 aa).

This sequence belongs to the reoviridae RNA-directed RNA polymerase family. Interacts with VP4.

The catalysed reaction is RNA(n) + a ribonucleoside 5'-triphosphate = RNA(n+1) + diphosphate. In terms of biological role, RNA-directed RNA polymerase involved in transcription and genome replication. Following infection, catalyzes the synthesis of fully conservative plus strands. After core assembly, which consists in recruitment of one capped plus-strand for each genomic segments and polymerase complexes, the polymerase switches mode and catalyzes the synthesis of complementary minus-strands. The protein is RNA-directed RNA polymerase VP1 of Callospermophilus lateralis (Golden-mantled ground squirrel).